A 507-amino-acid polypeptide reads, in one-letter code: Protein DETOXIFICATION 41 (507 aa).

At 1-62 the chain is on the cytoplasmic side; the sequence is MSSTETYEPL…KLLWTLSGAS (62 aa). A helical transmembrane segment spans residues 63–83; the sequence is IVVSVLNYMLSFVTVMFTGHL. Over 84–92 the chain is Vacuolar; the sequence is GSLQLAGAS. Residues 93 to 113 traverse the membrane as a helical segment; the sequence is IATVGIQGLAYGIMLGMASAV. Residues 114 to 137 lie on the Cytoplasmic side of the membrane; sequence QTVCGQAYGARQYSSMGIICQRAM. The chain crosses the membrane as a helical span at residues 138–158; the sequence is VLHLAAAVFLTFLYWYSGPIL. Residues 159–170 lie on the Vacuolar side of the membrane; that stretch reads KTMGQSVAIAHE. The chain crosses the membrane as a helical span at residues 171–191; sequence GQIFARGMIPQIYAFALACPM. Over 192–202 the chain is Cytoplasmic; sequence QRFLQAQNIVN. A helical transmembrane segment spans residues 203-223; it reads PLAYMSLGVFLLHTLLTWLVT. Residue N224 is a topological domain, vacuolar. Residues 225–245 form a helical membrane-spanning segment; that stretch reads VLDFGLLGAALILSFSWWLLV. Topologically, residues 246 to 283 are cytoplasmic; sequence AVNGMYILMSPNCKETWTGFSTRAFRGIWPYFKLTVAS. Residues 284–304 traverse the membrane as a helical segment; it reads AVMLCLEIWYNQGLVIISGLL. Topologically, residues 305–312 are vacuolar; it reads SNPTISLD. Residues 313 to 333 form a helical membrane-spanning segment; that stretch reads AISICMYYLNWDMQFMLGLSA. Over 334–355 the chain is Cytoplasmic; the sequence is AISVRVSNELGAGNPRVAMLSV. The chain crosses the membrane as a helical span at residues 356 to 376; the sequence is VVVNITTVLISSVLCVIVLVF. Residues 377 to 389 lie on the Vacuolar side of the membrane; that stretch reads RVGLSKAFTSDAE. A helical transmembrane segment spans residues 390 to 410; it reads VIAAVSDLFPLLAVSIFLNGI. Residues 411 to 425 lie on the Cytoplasmic side of the membrane; the sequence is QPILSGVAIGSGWQA. Residues 426–446 form a helical membrane-spanning segment; the sequence is VVAYVNLVTYYVIGLPIGCVL. Residues 447 to 453 lie on the Vacuolar side of the membrane; it reads GFKTSLG. A helical membrane pass occupies residues 454-474; sequence VAGIWWGMIAGVILQTLTLIV. Residues 475 to 507 are Cytoplasmic-facing; sequence LTLKTNWTSEVENAAQRVKTSATENQEMANAGV.

It belongs to the multi antimicrobial extrusion (MATE) (TC 2.A.66.1) family. Expressed in reproductive tissues, from buds to siliques. Restricted to the endothelium layer of the ovule and the seed coat.

The protein localises to the vacuole membrane. Its pathway is secondary metabolite biosynthesis; flavonoid biosynthesis. In terms of biological role, acts as a flavonoid/H(+)-antiporter that control the vacuolar sequestration of flavonoids in the seed coat endothelium. Could transport the anthocyanin cyanidin-3-O-glucoside and epicatechin 3'-O-glucoside in vitro. The protein is Protein DETOXIFICATION 41 of Arabidopsis thaliana (Mouse-ear cress).